The chain runs to 392 residues: Protein FAM53C (392 aa).

N-acetylmethionine is present on methionine 1. The interval 77–120 (HLRPPSRGSSPKEQPLSQVLRPEPPDPEKLPVPPAPPSKRHCRS) is disordered. A compositionally biased stretch (polar residues) spans 83–93 (RGSSPKEQPLS). Phosphoserine is present on residues serine 122 and serine 162. 3 disordered regions span residues 141-167 (LWTPIKHRGSGGGGGPQVPHQSPPKRV), 203-303 (SRPC…LDFD), and 340-364 (SASCSPTGGSSQVLSESEEEEEGAV). Polar residues predominate over residues 203–215 (SRPCATSPQSGSW). Phosphoserine occurs at positions 232, 234, 255, 273, and 299. Over residues 241–256 (ASRFLPSARSSPASSP) the composition is skewed to low complexity. Positions 278–303 (LDARKTGVKRRHEEDPRRLRPSLDFD) are enriched in basic and acidic residues.

The protein belongs to the FAM53 family.

The polypeptide is Protein FAM53C (Pongo abelii (Sumatran orangutan)).